Consider the following 443-residue polypeptide: Glucose-6-phosphate isomerase (443 aa).

Residue Glu-285 is the Proton donor of the active site. Residues His-306 and Lys-420 contribute to the active site.

It belongs to the GPI family.

The protein localises to the cytoplasm. It carries out the reaction alpha-D-glucose 6-phosphate = beta-D-fructose 6-phosphate. It functions in the pathway carbohydrate biosynthesis; gluconeogenesis. The protein operates within carbohydrate degradation; glycolysis; D-glyceraldehyde 3-phosphate and glycerone phosphate from D-glucose: step 2/4. Catalyzes the reversible isomerization of glucose-6-phosphate to fructose-6-phosphate. The chain is Glucose-6-phosphate isomerase from Staphylococcus haemolyticus (strain JCSC1435).